We begin with the raw amino-acid sequence, 428 residues long: Histidinol dehydrogenase (428 aa).

Residues serine 234, glutamine 256, and histidine 259 each contribute to the substrate site. Glutamine 256 and histidine 259 together coordinate Zn(2+). Active-site proton acceptor residues include glutamate 324 and histidine 325. Residues histidine 325, aspartate 358, glutamate 412, and histidine 417 each contribute to the substrate site. Aspartate 358 contacts Zn(2+). Histidine 417 lines the Zn(2+) pocket.

Belongs to the histidinol dehydrogenase family. Zn(2+) serves as cofactor.

It catalyses the reaction L-histidinol + 2 NAD(+) + H2O = L-histidine + 2 NADH + 3 H(+). It functions in the pathway amino-acid biosynthesis; L-histidine biosynthesis; L-histidine from 5-phospho-alpha-D-ribose 1-diphosphate: step 9/9. Its function is as follows. Catalyzes the sequential NAD-dependent oxidations of L-histidinol to L-histidinaldehyde and then to L-histidine. This chain is Histidinol dehydrogenase, found in Pelagibacter ubique (strain HTCC1062).